A 329-amino-acid chain; its full sequence is Beta-ketoacyl-[acyl-carrier-protein] synthase III (329 aa).

Residues Cys-113 and His-256 contribute to the active site. An ACP-binding region spans residues 257–261 (QANQR). Residue Asn-286 is part of the active site.

The protein belongs to the thiolase-like superfamily. FabH family. Homodimer.

It localises to the cytoplasm. It carries out the reaction malonyl-[ACP] + acetyl-CoA + H(+) = 3-oxobutanoyl-[ACP] + CO2 + CoA. The protein operates within lipid metabolism; fatty acid biosynthesis. Its function is as follows. Catalyzes the condensation reaction of fatty acid synthesis by the addition to an acyl acceptor of two carbons from malonyl-ACP. Catalyzes the first condensation reaction which initiates fatty acid synthesis and may therefore play a role in governing the total rate of fatty acid production. Possesses both acetoacetyl-ACP synthase and acetyl transacylase activities. Its substrate specificity determines the biosynthesis of branched-chain and/or straight-chain of fatty acids. The chain is Beta-ketoacyl-[acyl-carrier-protein] synthase III from Natranaerobius thermophilus (strain ATCC BAA-1301 / DSM 18059 / JW/NM-WN-LF).